The following is an 82-amino-acid chain: Delta-actitoxin-Aeq2b 1 (82 aa).

Positions 1-19 are cleaved as a signal peptide; sequence MNRLMILVFAAVILALASA. A propeptide spanning residues 20-26 is cleaved from the precursor; sequence DEDVDIA. Intrachain disulfides connect Cys-32–Cys-79, Cys-34–Cys-69, and Cys-62–Cys-80.

This sequence belongs to the sea anemone sodium channel inhibitory toxin family. Type I subfamily.

Its subcellular location is the secreted. The protein localises to the nematocyst. Its function is as follows. Binds specifically to voltage-gated sodium channels (Nav), thereby delaying their inactivation during signal transduction. Causes death to crabs. This is Delta-actitoxin-Aeq2b 1 from Actinia equina (Beadlet anemone).